The following is an 892-amino-acid chain: Protein argonaute 11 (892 aa).

Positions 1-17 (MSSRGGGVGGRRGGPGG) are enriched in gly residues. 2 disordered regions span residues 1 to 68 (MSSR…ALQP) and 86 to 117 (MEAREGASSSSSASAPAVGEVEPPSRAVGALP). A compositionally biased stretch (low complexity) spans 86 to 107 (MEAREGASSSSSASAPAVGEVE). One can recognise a PAZ domain in the interval 248–362 (SLKQFLAGTY…LPMEVCRIVK (115 aa)). The Piwi domain occupies 541 to 848 (LLVIVLPDAN…AASRARHYLE (308 aa)). Positions 850–876 (GSLPDHGSSSASAAGGSRRNDRGVPVK) are disordered. The segment covering 856–866 (GSSSASAAGGS) has biased composition (low complexity). Residues 867–876 (RRNDRGVPVK) show a composition bias toward basic and acidic residues.

This sequence belongs to the argonaute family. Ago subfamily.

Functionally, probably involved in the RNA silencing pathway. May bind to short RNAs such as microRNAs (miRNAs) or short interfering RNAs (siRNAs), and represses the translation of mRNAs which are complementary to them. This is Protein argonaute 11 (AGO11) from Oryza sativa subsp. japonica (Rice).